The chain runs to 598 residues: Arginine--tRNA ligase (598 aa).

Residues 140-150 (ANPTGPLHVGH) carry the 'HIGH' region motif.

Belongs to the class-I aminoacyl-tRNA synthetase family. As to quaternary structure, monomer.

It localises to the cytoplasm. It catalyses the reaction tRNA(Arg) + L-arginine + ATP = L-arginyl-tRNA(Arg) + AMP + diphosphate. The chain is Arginine--tRNA ligase from Synechococcus sp. (strain JA-3-3Ab) (Cyanobacteria bacterium Yellowstone A-Prime).